The primary structure comprises 209 residues: Protein N-terminal glutamine amidohydrolase (209 aa).

Catalysis depends on residues C30, H83, and D99.

Belongs to the NTAQ1 family. In terms of assembly, monomer. As to expression, widely expressed.

The protein resides in the cytoplasm. It localises to the cytosol. Its subcellular location is the nucleus. The enzyme catalyses N-terminal L-glutaminyl-[protein] + H2O = N-terminal L-glutamyl-[protein] + NH4(+). Its function is as follows. Mediates the side-chain deamidation of N-terminal glutamine residues to glutamate, an important step in N-end rule pathway of protein degradation. Conversion of the resulting N-terminal glutamine to glutamate renders the protein susceptible to arginylation, polyubiquitination and degradation as specified by the N-end rule. Does not act on substrates with internal or C-terminal glutamine and does not act on non-glutamine residues in any position. Does not deaminate acetylated N-terminal glutamine. With the exception of proline, all tested second-position residues on substrate peptides do not greatly influence the activity. In contrast, a proline at position 2, virtually abolishes deamidation of N-terminal glutamine. This is Protein N-terminal glutamine amidohydrolase (Ntaq1) from Mus musculus (Mouse).